The sequence spans 490 residues: Betaine aldehyde dehydrogenase (490 aa).

Residues Thr-26, Ile-27, and Asp-93 each contribute to the K(+) site. 150–152 serves as a coordination point for NAD(+); that stretch reads GAW. Lys-162 serves as the catalytic Charge relay system. Residue 176 to 179 participates in NAD(+) binding; sequence KPSE. Val-180 provides a ligand contact to K(+). 230-233 provides a ligand contact to NAD(+); the sequence is GVAS. Leu-246 provides a ligand contact to K(+). Catalysis depends on Glu-252, which acts as the Proton acceptor. Residues Gly-254, Cys-286, and Glu-387 each contribute to the NAD(+) site. The Nucleophile role is filled by Cys-286. Cys-286 is modified (cysteine sulfenic acid (-SOH)). K(+) is bound by residues Lys-457 and Gly-460. Glu-464 acts as the Charge relay system in catalysis.

It belongs to the aldehyde dehydrogenase family. As to quaternary structure, dimer of dimers. It depends on K(+) as a cofactor.

The enzyme catalyses betaine aldehyde + NAD(+) + H2O = glycine betaine + NADH + 2 H(+). It participates in amine and polyamine biosynthesis; betaine biosynthesis via choline pathway; betaine from betaine aldehyde: step 1/1. In terms of biological role, involved in the biosynthesis of the osmoprotectant glycine betaine. Catalyzes the irreversible oxidation of betaine aldehyde to the corresponding acid. This chain is Betaine aldehyde dehydrogenase, found in Shigella flexneri serotype 5b (strain 8401).